Here is a 427-residue protein sequence, read N- to C-terminus: L-rhamnose isomerase (427 aa).

H264, D296, and D298 together coordinate Mn(2+).

The protein belongs to the rhamnose isomerase family. It depends on Mn(2+) as a cofactor.

Its subcellular location is the cytoplasm. The catalysed reaction is L-rhamnopyranose = L-rhamnulose. Its pathway is carbohydrate degradation; L-rhamnose degradation; glycerone phosphate from L-rhamnose: step 1/3. Its function is as follows. Catalyzes the interconversion of L-rhamnose and L-rhamnulose. This is L-rhamnose isomerase from Lactiplantibacillus plantarum (strain ATCC BAA-793 / NCIMB 8826 / WCFS1) (Lactobacillus plantarum).